The sequence spans 356 residues: (+)-(1(10)E,4E,6S,7R)-germacradien-6-ol synthase (356 aa).

Mg(2+) is bound by residues Asp86 and Asp91. The DDXXXD motif motif lies at Asp86–Asp91. Residue Arg181 participates in substrate binding. Residues Asn227 and Ser231 each coordinate Mg(2+). Lys234 contacts substrate. Glu235 lines the Mg(2+) pocket. A substrate-binding site is contributed by Arg314 to Tyr315.

This sequence belongs to the terpene synthase family. Mg(2+) serves as cofactor.

The enzyme catalyses (2E,6E)-farnesyl diphosphate + H2O = (+)-(1(10)E,4E,6S,7R)-germacradien-6-ol + diphosphate. It functions in the pathway secondary metabolite biosynthesis; terpenoid biosynthesis. In terms of biological role, catalyzes the conversion of (2E,6E)-farnesyl diphosphate (FPP) to yield the sesquiterpene (+)-(1(10)E,4E,6S,7R)-germacradien-6-ol via a putative 1,10-cyclization, which could require the abstraction of the pyrophosphate from FPP to yield the (E,E)-germacradienyl cation. The only accepted substrate is farnesyl diphosphate (FPP). The polypeptide is (+)-(1(10)E,4E,6S,7R)-germacradien-6-ol synthase (Streptomyces pratensis (strain ATCC 33331 / IAF-45CD)).